Reading from the N-terminus, the 316-residue chain is Protoheme IX farnesyltransferase (316 aa).

The next 9 membrane-spanning stretches (helical) occupy residues 32–52, 53–73, 98–118, 120–140, 153–173, 180–200, 226–246, 251–271, and 280–300; these read VMSL…THVN, PIIG…SGAL, VARE…VITL, FVAN…YVVI, IVIG…AVAG, LALF…LALV, ILLY…IGFA, GLLS…VYLA, and VAMR…AAIV.

The protein belongs to the UbiA prenyltransferase family. Protoheme IX farnesyltransferase subfamily.

It localises to the cell inner membrane. The enzyme catalyses heme b + (2E,6E)-farnesyl diphosphate + H2O = Fe(II)-heme o + diphosphate. The protein operates within porphyrin-containing compound metabolism; heme O biosynthesis; heme O from protoheme: step 1/1. Converts heme B (protoheme IX) to heme O by substitution of the vinyl group on carbon 2 of heme B porphyrin ring with a hydroxyethyl farnesyl side group. The sequence is that of Protoheme IX farnesyltransferase from Methylocella silvestris (strain DSM 15510 / CIP 108128 / LMG 27833 / NCIMB 13906 / BL2).